The chain runs to 726 residues: DNA-directed RNA polymerase subunit beta N-terminal section (726 aa).

Belongs to the RNA polymerase beta chain family. In terms of assembly, in plastids the minimal PEP RNA polymerase catalytic core is composed of four subunits: alpha, beta, beta', and beta''. When a (nuclear-encoded) sigma factor is associated with the core the holoenzyme is formed, which can initiate transcription.

Its subcellular location is the plastid. The protein localises to the chloroplast. The catalysed reaction is RNA(n) + a ribonucleoside 5'-triphosphate = RNA(n+1) + diphosphate. Functionally, DNA-dependent RNA polymerase catalyzes the transcription of DNA into RNA using the four ribonucleoside triphosphates as substrates. The sequence is that of DNA-directed RNA polymerase subunit beta N-terminal section (rpoB1) from Tetradesmus obliquus (Green alga).